A 635-amino-acid chain; its full sequence is tRNA 5-methylaminomethyl-2-thiouridine biosynthesis bifunctional protein MnmC (635 aa).

The segment at 1–227 (MSEPIDWLPD…KRSNLQAEFD (227 aa)) is tRNA (mnm(5)s(2)U34)-methyltransferase. Positions 254–635 (IGGGLSGAAV…ALSTERLPAD (382 aa)) are FAD-dependent cmnm(5)s(2)U34 oxidoreductase.

It in the N-terminal section; belongs to the methyltransferase superfamily. tRNA (mnm(5)s(2)U34)-methyltransferase family. The protein in the C-terminal section; belongs to the DAO family. FAD is required as a cofactor.

Its subcellular location is the cytoplasm. The enzyme catalyses 5-aminomethyl-2-thiouridine(34) in tRNA + S-adenosyl-L-methionine = 5-methylaminomethyl-2-thiouridine(34) in tRNA + S-adenosyl-L-homocysteine + H(+). Catalyzes the last two steps in the biosynthesis of 5-methylaminomethyl-2-thiouridine (mnm(5)s(2)U) at the wobble position (U34) in tRNA. Catalyzes the FAD-dependent demodification of cmnm(5)s(2)U34 to nm(5)s(2)U34, followed by the transfer of a methyl group from S-adenosyl-L-methionine to nm(5)s(2)U34, to form mnm(5)s(2)U34. This is tRNA 5-methylaminomethyl-2-thiouridine biosynthesis bifunctional protein MnmC from Paracidovorax citrulli (strain AAC00-1) (Acidovorax citrulli).